Here is a 667-residue protein sequence, read N- to C-terminus: Protein angel homolog 1 (667 aa).

Phosphoserine is present on residues serine 77 and serine 105.

This sequence belongs to the CCR4/nocturin family.

In Mus musculus (Mouse), this protein is Protein angel homolog 1.